Reading from the N-terminus, the 239-residue chain is Tetrahydromethanopterin S-methyltransferase subunit A (239 aa).

The Cytoplasmic segment spans residues 1-215 (MANKKSPAAT…EAAMIAKFNS (215 aa)). Residue His-85 coordinates 5-hydroxybenzimidazolylcob(I)amide. Residues 216-238 (GYYNGKIQGIAIGLFLSILVFSL) traverse the membrane as a helical segment. Residue Leu-239 is a topological domain, extracellular.

This sequence belongs to the MtrA family. As to quaternary structure, the complex is composed of 8 subunits; MtrA, MtrB, MtrC, MtrD, MtrE, MtrF, MtrG and MtrH. 5-hydroxybenzimidazolylcob(I)amide serves as cofactor.

The protein localises to the cell membrane. It catalyses the reaction 5-methyl-5,6,7,8-tetrahydromethanopterin + coenzyme M + 2 Na(+)(in) = 5,6,7,8-tetrahydromethanopterin + methyl-coenzyme M + 2 Na(+)(out). The protein operates within one-carbon metabolism; methanogenesis from CO(2); methyl-coenzyme M from 5,10-methylene-5,6,7,8-tetrahydromethanopterin: step 2/2. In terms of biological role, part of a complex that catalyzes the formation of methyl-coenzyme M and tetrahydromethanopterin from coenzyme M and methyl-tetrahydromethanopterin. This is an energy-conserving, sodium-ion translocating step. This Methanococcus maripaludis (strain C7 / ATCC BAA-1331) protein is Tetrahydromethanopterin S-methyltransferase subunit A.